Reading from the N-terminus, the 416-residue chain is tRNA(Met) cytidine acetate ligase (416 aa).

ATP contacts are provided by residues 7-20 (VVEY…HLHH), Gly-101, Asn-162, and 187-188 (RI).

The protein belongs to the TmcAL family.

The protein localises to the cytoplasm. The enzyme catalyses cytidine(34) in elongator tRNA(Met) + acetate + ATP = N(4)-acetylcytidine(34) in elongator tRNA(Met) + AMP + diphosphate. Catalyzes the formation of N(4)-acetylcytidine (ac(4)C) at the wobble position of elongator tRNA(Met), using acetate and ATP as substrates. First activates an acetate ion to form acetyladenylate (Ac-AMP) and then transfers the acetyl group to tRNA to form ac(4)C34. The sequence is that of tRNA(Met) cytidine acetate ligase from Halalkalibacterium halodurans (strain ATCC BAA-125 / DSM 18197 / FERM 7344 / JCM 9153 / C-125) (Bacillus halodurans).